A 526-amino-acid chain; its full sequence is Thymocyte selection-associated high mobility group box protein TOX (526 aa).

Positions 194-203 are enriched in polar residues; sequence NMGGTNVAHN. Residues 194-264 are disordered; it reads NMGGTNVAHN…KKDPNEPQKP (71 aa). The segment covering 209–220 has biased composition (low complexity); it reads GSKSATPSPSSS. A compositionally biased stretch (basic and acidic residues) spans 228–245; that stretch reads DASKINGGEKRPASDMGK. The Nuclear localization signal signature appears at 237-256; sequence KRPASDMGKKPKTPKKKKKK. Residues 246–256 show a composition bias toward basic residues; sequence KPKTPKKKKKK. A DNA-binding region (HMG box) is located at residues 261 to 329; that stretch reads PQKPVSAYAL…EYLKQLAAYR (69 aa).

It belongs to the high motility group (HMG) box superfamily. As to quaternary structure, interacts with HBO1 complex composed at least of KAT7/HBO1, ING4, MEAF6, and JADE2; this complex is involved in histone acetylation. Interacts with DNMT1, LEO1, PAF1, SAP130 and SIN3A; these interactors regulate chromatin remodeling. Interacts with an array of proteins involved in RNA processing and translation and DNA replication. In terms of tissue distribution, expressed in neurons of the subventricular zone (at protein level). Expressed in distinct subpopulations of thymocytes undergoing positive selection: double CD4-positive CD8-positive (DP) cells, CD4-positive CD8-low transitional cells and in single CD4-positive and CD8-positive cells (at protein level). Expressed in ILC progenitors and mature ILC subsets: ILC1, ILC2 and ILC3 (at protein level). Expressed in lymphoid tissue-inducer cells and bone marrow NK cell subsets. Abundant in thymus, liver and brain. Also detected in small intestine, spleen, stomach and testis. Highly expressed in tumor-infiltrating CD8-positive T cells (at protein level).

It localises to the nucleus. Functionally, transcriptional regulator with a major role in neural stem cell commitment and corticogenesis as well as in lymphoid cell development and lymphoid tissue organogenesis. Binds to GC-rich DNA sequences in the proximity of transcription start sites and may alter chromatin structure, modifying access of transcription factors to DNA. During cortical development, controls the neural stem cell pool by inhibiting the switch from proliferative to differentiating progenitors. Beyond progenitor cells, promotes neurite outgrowth in newborn neurons migrating to reach the cortical plate. May activate or repress critical genes for neural stem cell fate such as SOX2, EOMES and ROBO2. Plays an essential role in the development of lymphoid tissue-inducer (LTi) cells, a subset necessary for the formation of secondary lymphoid organs: peripheral lymph nodes and Peyer's patches. Acts as a developmental checkpoint and regulates thymocyte positive selection toward T cell lineage commitment. Required for the development of various T cell subsets, including CD4-positive helper T cells, CD8-positive cytotoxic T cells, regulatory T cells and CD1D-dependent natural killer T (NKT) cells. Required for the differentiation of common lymphoid progenitors (CMP) to innate lymphoid cells (ILC). May regulate the NOTCH-mediated gene program, promoting differentiation of the ILC lineage. Required at the progenitor phase of NK cell development in the bone marrow to specify NK cell lineage commitment. Upon chronic antigen stimulation, diverts T cell development by promoting the generation of exhaustive T cells, while suppressing effector and memory T cell programming. May regulate the expression of genes encoding inhibitory receptors such as PDCD1 and induce the exhaustion program, to prevent the overstimulation of T cells and activation-induced cell death. In Mus musculus (Mouse), this protein is Thymocyte selection-associated high mobility group box protein TOX.